Here is a 45-residue protein sequence, read N- to C-terminus: Gene 78 protein (45 aa).

Basic and acidic residues predominate over residues Met-1–Leu-14. Residues Met-1–Tyr-45 form a disordered region. Residues His-23–Lys-35 show a composition bias toward basic residues.

This Mycobacterium phage L5 (Mycobacteriophage L5) protein is Gene 78 protein (78).